The sequence spans 163 residues: Interleukin-17F (163 aa).

An N-terminal signal peptide occupies residues Met-1 to Ala-30. Residue Asn-83 is glycosylated (N-linked (GlcNAc...) asparagine). 2 cysteine pairs are disulfide-bonded: Cys-102-Cys-152 and Cys-107-Cys-154.

Belongs to the IL-17 family. In terms of assembly, homodimer; disulfide-linked. Heterodimer with IL17A (IL17A-IL17F). Forms complexes with IL17RA and IL17RC receptors with 2:1 binding stoichiometry: two receptor chains for one interleukin molecule. IL17F homodimer forms predominantly complexes with IL17RC homodimer, whereas IL17A-IL17F favors complexes with IL17RA-IL17RC. IL17RA and IL17RC chains cannot distinguish between IL17A and IL17F molecules, potentially enabling the formation of topologically distinct complexes. In terms of tissue distribution, expressed in T-helper 1 and T-helper 2 cells, basophils and mast cells.

Its subcellular location is the secreted. Effector cytokine of innate and adaptive immune system involved in antimicrobial host defense and maintenance of tissue integrity. IL17A-IL17F signals via IL17RA-IL17RC heterodimeric receptor complex, triggering homotypic interaction of IL17RA and IL17RC chains with TRAF3IP2 adapter through SEFIR domains. This leads to downstream TRAF6-mediated activation of NF-kappa-B and MAPkinase pathways ultimately resulting in transcriptional activation of cytokines, chemokines, antimicrobial peptides and matrix metalloproteinases, with potential strong immune inflammation. IL17A-IL17F is primarily involved in host defense against extracellular bacteria and fungi by inducing neutrophilic inflammation. As signature effector cytokine of T-helper 17 cells (Th17), primarily induces neutrophil activation and recruitment at infection and inflammatory sites. Stimulates the production of antimicrobial beta-defensins DEFB1, DEFB103A, and DEFB104A by mucosal epithelial cells, limiting the entry of microbes through the epithelial barriers. IL17F homodimer can signal via IL17RC homodimeric receptor complex, triggering downstream activation of TRAF6 and NF-kappa-B signaling pathway. Via IL17RC induces transcriptional activation of IL33, a potent cytokine that stimulates group 2 innate lymphoid cells and adaptive T-helper 2 cells involved in pulmonary allergic response to fungi. Likely via IL17RC, promotes sympathetic innervation of peripheral organs by coordinating the communication between gamma-delta T cells and parenchymal cells. Stimulates sympathetic innervation of thermogenic adipose tissue by driving TGFB1 expression. Regulates the composition of intestinal microbiota and immune tolerance by inducing antimicrobial proteins that specifically control the growth of commensal Firmicutes and Bacteroidetes. The polypeptide is Interleukin-17F (IL17F) (Homo sapiens (Human)).